Here is a 500-residue protein sequence, read N- to C-terminus: MRKRSRKVKNDLVVLESKEKKVGMWGIFALILIVFGFIIAPLLPGIFDNAHSSGLKFGSYKGQPIYYKKDSKFAKYVNYYSNLYSRLQGNAKNINTDYNAWYLAFMKYVEDVAFLDLVKKYNFYISKEMLNKNLLKSPEYLDSSGNFSSKRYNKASDYQKVKIYDDMVENILFSNVKIFLNSNLIFPDSLFDMIKNMSTVERHISYLSLSYQDFSNKEVISYAEKNLNLFKRLSLASIRFKNMNDARTAHDKLLNKTPFEELAKLYSDDIANFKGVVSLDKYYFDLDLNVEKKEDLNSIFSLREGEFSKPIKIKNKNEYQIYKAFSNVHDFDKNSDRDISSVKNYIETYEPSVIEGYLENKLSDFLGDVKFSSLSQVLEKYQLSLKEEIVNLSYNINVYPNTLKELVEFNNSKSFYDIIFGLKENSWSKPFVANKKVYLFFLNSVKKRSNQLKDEIKNEKILDNFNIANSGLITDFLLNKKDFVNNFNESFFALQNFSQN.

Residues 27–47 traverse the membrane as a helical segment; the sequence is IFALILIVFGFIIAPLLPGIF.

It is found in the membrane. This is an uncharacterized protein from Borreliella burgdorferi (strain ATCC 35210 / DSM 4680 / CIP 102532 / B31) (Borrelia burgdorferi).